The sequence spans 673 residues: UvrABC system protein B (673 aa).

The region spanning 26–183 (EGLEDGLAHQ…RRLAELQYTR (158 aa)) is the Helicase ATP-binding domain. Residue 39–46 (GVTGSGKT) coordinates ATP. Positions 92–115 (YYDYYQPEAYVPSSDTFIEKDASV) match the Beta-hairpin motif. The Helicase C-terminal domain occupies 431–597 (QVDDLLSEIR…GLNKKVVDIL (167 aa)). Positions 608–627 (AKGRGKSRPIVEPDNVPMDM) are disordered. The region spanning 633–668 (QQKIHELEGLMMQHAQNLEFEEAAQIRDQLHQLREL) is the UVR domain.

Belongs to the UvrB family. As to quaternary structure, forms a heterotetramer with UvrA during the search for lesions. Interacts with UvrC in an incision complex.

It is found in the cytoplasm. Functionally, the UvrABC repair system catalyzes the recognition and processing of DNA lesions. A damage recognition complex composed of 2 UvrA and 2 UvrB subunits scans DNA for abnormalities. Upon binding of the UvrA(2)B(2) complex to a putative damaged site, the DNA wraps around one UvrB monomer. DNA wrap is dependent on ATP binding by UvrB and probably causes local melting of the DNA helix, facilitating insertion of UvrB beta-hairpin between the DNA strands. Then UvrB probes one DNA strand for the presence of a lesion. If a lesion is found the UvrA subunits dissociate and the UvrB-DNA preincision complex is formed. This complex is subsequently bound by UvrC and the second UvrB is released. If no lesion is found, the DNA wraps around the other UvrB subunit that will check the other stand for damage. This Escherichia fergusonii (strain ATCC 35469 / DSM 13698 / CCUG 18766 / IAM 14443 / JCM 21226 / LMG 7866 / NBRC 102419 / NCTC 12128 / CDC 0568-73) protein is UvrABC system protein B.